Reading from the N-terminus, the 613-residue chain is Oxidoreductase GME11365 (613 aa).

3 consecutive Plastocyanin-like domains span residues 72-188 (ISEA…HGPS), 198-331 (PLLI…WIHG), and 431-571 (VDWR…EQPS).

It belongs to the multicopper oxidase family.

The protein operates within secondary metabolite biosynthesis. Functionally, oxidoreductase; part of the gene cluster that mediates the biosynthesis of dibenzodioxocinones such as pestalotiollide B, a novel class of inhibitors against cholesterol ester transfer protein (CEPT). The biosynthesis initiates from condensation of acetate and malonate units catalyzed by the non-reducing PKS pks8/GME11356. Pks8/GME11356 lacks a thioesterase (TE) domain, which is important to the cyclizing of the third ring of atrochrysone carboxylic acid, and the esterase GME11355 might play the role of TE and catalyzes the cyclization reaction of the C ring. The lactamase-like protein GME11357 (or other beta-lactamases in Pestalotiopsis microspora) probably hydrolyzes the thioester bond between the ACP of pks8/GME11356 and the intermediate to release atrochrysone carboxylic acid, which is spontaneously dehydrates to form endocrocin anthrone. Endocrocin anthrone is further converted to emodin via the endocrocin intermediate. Emodin is then oxidized by several enzymes such as the Baeyer-Villiger oxidase GME11358, the oxidoreductase GME11367, the short chain dehydrogenase/reductase GME11373, as well as by other oxidoreductases from the cluster, to modify the A and C rings and open the B ring, and finally yield monodictyphenone. The prenyltransferase GME11375 may catalyze the addition reaction between the C5 side chains and the carbon bone of dibenzodioxocinones. The remaining biochemical reactions to the final product dibenzodioxocinones should be methylation catalyzed by methyltransferase GME11366 and reduction and lactonization reaction catalyzed by a series of oxidordeuctases. The sequence is that of Oxidoreductase GME11365 from Pestalotiopsis microspora.